We begin with the raw amino-acid sequence, 258 residues long: Polysialic acid transport protein KpsM (258 aa).

Topologically, residues 1–30 are cytoplasmic; sequence MARSGFEVQKVTVEALFLREIRTRFGKFRL. An ABC transmembrane type-2 domain is found at 30-251; the sequence is LGYLWAILEP…FIGLALYRTR (222 aa). The helical transmembrane segment at 31–54 threads the bilayer; it reads GYLWAILEPSAHLLILLGILGYVM. Residues 55 to 61 are Periplasmic-facing; it reads HRTMPDI. The chain crosses the membrane as a helical span at residues 62 to 81; that stretch reads SFPVFLLNGLIPFFIFSSIS. Residues 82–108 lie on the Cytoplasmic side of the membrane; the sequence is KRSIGAIEANQGLFNYRPVKPIDTIIA. The chain crosses the membrane as a helical span at residues 109 to 132; the sequence is RALLETLIYVAVYILLMLIVWMTG. Topologically, residues 133-143 are periplasmic; sequence EYFEITNFLQL. Residues 144–165 traverse the membrane as a helical segment; sequence VLTWSLLIILSCGVGLIFMVVG. Residues 166–174 lie on the Cytoplasmic side of the membrane; it reads KTFPEMQKV. The chain crosses the membrane as a helical span at residues 175 to 195; it reads LPILLKPLYFISCIMFPLHSI. Over 196–226 the chain is Periplasmic; the sequence is PKQYWSYLLWNPLVHVVELSREAVMPGYISE. Residues 227 to 247 traverse the membrane as a helical segment; sequence GVSLNYLAMFTLVTLFIGLAL. Topologically, residues 248–258 are cytoplasmic; sequence YRTREEAMLTS.

This sequence belongs to the ABC-2 integral membrane protein family.

It is found in the cell inner membrane. KpsM and KpsT constitute a system for the transport of polysialic acid across the cytoplasmic membrane. The polypeptide is Polysialic acid transport protein KpsM (kpsM) (Escherichia coli).